The following is a 172-amino-acid chain: DNA-directed RNA polymerase II subunit rpb7 (172 aa).

It belongs to the eukaryotic RPB7/RPC8 RNA polymerase subunit family. Component of the RNA polymerase II (Pol II) complex consisting of 12 subunits. RPB4 and RPB7 form a subcomplex that protrudes from the 10-subunit Pol II core complex.

The protein resides in the nucleus. DNA-dependent RNA polymerase catalyzes the transcription of DNA into RNA using the four ribonucleoside triphosphates as substrates. Component of RNA polymerase II which synthesizes mRNA precursors and many functional non-coding RNAs. Pol II is the central component of the basal RNA polymerase II transcription machinery. It is composed of mobile elements that move relative to each other. RPB7 is part of a subcomplex with RPB4 that binds to a pocket formed by RPB1, RPB2 and RPB6 at the base of the clamp element. The RPB4-RPB7 subcomplex seems to lock the clamp via RPB7 in the closed conformation thus preventing double-stranded DNA to enter the active site cleft. The RPB4-RPB7 subcomplex binds single-stranded DNA and RNA. In Dictyostelium discoideum (Social amoeba), this protein is DNA-directed RNA polymerase II subunit rpb7 (polr2g).